Consider the following 136-residue polypeptide: Histone H3.2 (136 aa).

The disordered stretch occupies residues 1 to 43 (MARTKQTARKSTGGKAPRKQLATKAARKSAPATGGVKKPHRFR). Residues K5 and K10 each carry the N6,N6,N6-trimethyllysine; alternate modification. N6,N6-dimethyllysine; alternate occurs at positions 5 and 10. N6-methyllysine; alternate is present on residues K5 and K10. The residue at position 10 (K10) is an N6-acetyllysine; alternate. S11 is modified (phosphoserine). T12 is modified (phosphothreonine). Position 15 is an N6-acetyllysine (K15). K19, K24, and K28 each carry N6-methyllysine; alternate. N6-acetyllysine; alternate is present on residues K19 and K24. An N6,N6,N6-trimethyllysine; alternate modification is found at K28. Residue K28 is modified to N6,N6-dimethyllysine; alternate. S29 is subject to Phosphoserine. Position 37 is an N6,N6,N6-trimethyllysine; alternate (K37). K37 carries the N6,N6-dimethyllysine; alternate modification. At K37 the chain carries N6-methyllysine; alternate.

This sequence belongs to the histone H3 family. As to quaternary structure, the nucleosome is a histone octamer containing two molecules each of H2A, H2B, H3 and H4 assembled in one H3-H4 heterotetramer and two H2A-H2B heterodimers. The octamer wraps approximately 147 bp of DNA. In terms of processing, acetylation is generally linked to gene activation. Can be acetylated to form H3K9ac, H3K14ac, H3K18ac and H3K23ac. H3K9ac could compete with H3K9me and prevent gene silencing. H3K9ac is restricted to euchromatin. Post-translationally, methylated to form mainly H3K4me, H3K9me, H3K18me, H3K23me, H3K27me and H3K36me. H3K4me1/2/3, H3K9me3, H3K27me3 and H3K36me1/2/3 are typical marks for euchromatin, whereas heterochromatic chromocenters are enriched in H3K9me1/2 and H3K27me1/2. H2BK143ub1 is probably prerequisite for H3K4me. Can be phosphorylated to form H3S10ph, H3T11ph and H3S28ph.

The protein localises to the nucleus. It is found in the chromosome. Its function is as follows. Core component of nucleosome. Nucleosomes wrap and compact DNA into chromatin, limiting DNA accessibility to the cellular machineries which require DNA as a template. Histones thereby play a central role in transcription regulation, DNA repair, DNA replication and chromosomal stability. DNA accessibility is regulated via a complex set of post-translational modifications of histones, also called histone code, and nucleosome remodeling. In Brassica napus (Rape), this protein is Histone H3.2.